The chain runs to 515 residues: Cytochrome P450 1A2 (515 aa).

S69 is a glycosylation site (O-linked (GlcNAc) serine). F226 is a substrate binding site. C458 contributes to the heme binding site.

Belongs to the cytochrome P450 family. Interacts with PGRMC1; the interaction requires PGRMC1 homodimerization. It depends on heme as a cofactor.

It localises to the endoplasmic reticulum membrane. The protein resides in the microsome membrane. The enzyme catalyses an organic molecule + reduced [NADPH--hemoprotein reductase] + O2 = an alcohol + oxidized [NADPH--hemoprotein reductase] + H2O + H(+). It catalyses the reaction 17beta-estradiol + reduced [NADPH--hemoprotein reductase] + O2 = 2-hydroxy-17beta-estradiol + oxidized [NADPH--hemoprotein reductase] + H2O + H(+). It carries out the reaction 17beta-estradiol + reduced [NADPH--hemoprotein reductase] + O2 = 4-hydroxy-17beta-estradiol + oxidized [NADPH--hemoprotein reductase] + H2O + H(+). The catalysed reaction is estrone + reduced [NADPH--hemoprotein reductase] + O2 = 2-hydroxyestrone + oxidized [NADPH--hemoprotein reductase] + H2O + H(+). The enzyme catalyses estrone + reduced [NADPH--hemoprotein reductase] + O2 = 4-hydroxyestrone + oxidized [NADPH--hemoprotein reductase] + H2O + H(+). It catalyses the reaction cholesterol + reduced [NADPH--hemoprotein reductase] + O2 = 25-hydroxycholesterol + oxidized [NADPH--hemoprotein reductase] + H2O + H(+). It carries out the reaction all-trans-retinol + reduced [NADPH--hemoprotein reductase] + O2 = all-trans-retinal + oxidized [NADPH--hemoprotein reductase] + 2 H2O + H(+). The catalysed reaction is all-trans-retinal + reduced [NADPH--hemoprotein reductase] + O2 = all-trans-retinoate + oxidized [NADPH--hemoprotein reductase] + H2O + 2 H(+). The enzyme catalyses (5Z,8Z,11Z,14Z)-eicosatetraenoate + reduced [NADPH--hemoprotein reductase] + O2 = (14R,15S)-epoxy-(5Z,8Z,11Z)-eicosatrienoate + oxidized [NADPH--hemoprotein reductase] + H2O + H(+). It catalyses the reaction (5Z,8Z,11Z,14Z)-eicosatetraenoate + reduced [NADPH--hemoprotein reductase] + O2 = (14S,15R)-epoxy-(5Z,8Z,11Z)-eicosatrienoate + oxidized [NADPH--hemoprotein reductase] + H2O + H(+). It carries out the reaction (5Z,8Z,11Z,14Z,17Z)-eicosapentaenoate + reduced [NADPH--hemoprotein reductase] + O2 = (17R,18S)-epoxy-(5Z,8Z,11Z,14Z)-eicosatetraenoate + oxidized [NADPH--hemoprotein reductase] + H2O + H(+). The catalysed reaction is (4Z,7Z,10Z,13Z,16Z,19Z)-docosahexaenoate + reduced [NADPH--hemoprotein reductase] + O2 = (19R,20S)-epoxy-(4Z,7Z,10Z,13Z,16Z)-docosapentaenoate + oxidized [NADPH--hemoprotein reductase] + H2O + H(+). The enzyme catalyses (5S)-hydroperoxy-(6E,8Z,11Z,14Z)-eicosatetraenoate = 5-oxo-(6E,8Z,11Z,14Z)-eicosatetraenoate + H2O. It catalyses the reaction (12S)-hydroperoxy-(5Z,8Z,10E,14Z)-eicosatetraenoate = 12-oxo-(5Z,8Z,10E,14Z)-eicosatetraenoate + H2O. It carries out the reaction (15S)-hydroperoxy-(5Z,8Z,11Z,13E)-eicosatetraenoate = 15-oxo-(5Z,8Z,11Z,13E)-eicosatetraenoate + H2O. The catalysed reaction is (13S)-hydroperoxy-(9Z,11E)-octadecadienoate = 13-oxo-(9Z,11E)-octadecadienoate + H2O. The enzyme catalyses (5Z,8Z,11Z,14Z)-eicosatetraenoate + reduced [NADPH--hemoprotein reductase] + O2 = 13-hydroxy-(5Z,8Z,11Z,14Z)-eicosatetraenoate + oxidized [NADPH--hemoprotein reductase] + H2O + H(+). It catalyses the reaction (5Z,8Z,11Z,14Z)-eicosatetraenoate + reduced [NADPH--hemoprotein reductase] + O2 = 19-hydroxy-(5Z,8Z,11Z,14Z)-eicosatetraenoate + oxidized [NADPH--hemoprotein reductase] + H2O + H(+). It carries out the reaction (9Z,12Z)-octadecadienoate + reduced [NADPH--hemoprotein reductase] + O2 = 11-hydroxy-(9Z,12Z)-octadecadienoate + oxidized [NADPH--hemoprotein reductase] + H2O + H(+). The protein operates within cofactor metabolism; retinol metabolism. It participates in steroid metabolism; cholesterol metabolism. Its pathway is lipid metabolism; arachidonate metabolism. Functionally, a cytochrome P450 monooxygenase involved in the metabolism of various endogenous substrates, including fatty acids, steroid hormones and vitamins. Mechanistically, uses molecular oxygen inserting one oxygen atom into a substrate, and reducing the second into a water molecule, with two electrons provided by NADPH via cytochrome P450 reductase (NADPH--hemoprotein reductase). Catalyzes the hydroxylation of carbon-hydrogen bonds. Exhibits high catalytic activity for the formation of hydroxyestrogens from estrone (E1) and 17beta-estradiol (E2), namely 2-hydroxy E1 and E2. Metabolizes cholesterol toward 25-hydroxycholesterol, a physiological regulator of cellular cholesterol homeostasis. May act as a major enzyme for all-trans retinoic acid biosynthesis in the liver. Catalyzes two successive oxidative transformation of all-trans retinol to all-trans retinal and then to the active form all-trans retinoic acid. Primarily catalyzes stereoselective epoxidation of the last double bond of polyunsaturated fatty acids (PUFA), displaying a strong preference for the (R,S) stereoisomer. Catalyzes bisallylic hydroxylation and omega-1 hydroxylation of PUFA. May also participate in eicosanoids metabolism by converting hydroperoxide species into oxo metabolites (lipoxygenase-like reaction, NADPH-independent). Plays a role in the oxidative metabolism of xenobiotics. Catalyzes the N-hydroxylation of heterocyclic amines and the O-deethylation of phenacetin. Metabolizes caffeine via N3-demethylation. This is Cytochrome P450 1A2 (CYP1A2) from Cavia porcellus (Guinea pig).